The following is a 441-amino-acid chain: Ribulose bisphosphate carboxylase large chain (441 aa).

Positions 89 and 139 each coordinate substrate. Lys141 (proton acceptor) is an active-site residue. Lys143 serves as a coordination point for substrate. 3 residues coordinate Mg(2+): Lys167, Asp169, and Glu170. Lys167 is modified (N6-carboxylysine). Catalysis depends on His260, which acts as the Proton acceptor. Substrate-binding residues include Arg261, His293, and Ser345.

Belongs to the RuBisCO large chain family. Type I subfamily. As to quaternary structure, heterohexadecamer of 8 large chains and 8 small chains; disulfide-linked. The disulfide link is formed within the large subunit homodimers. The cofactor is Mg(2+). In terms of processing, the disulfide bond which can form in the large chain dimeric partners within the hexadecamer appears to be associated with oxidative stress and protein turnover.

It is found in the plastid. The protein localises to the chloroplast. It catalyses the reaction 2 (2R)-3-phosphoglycerate + 2 H(+) = D-ribulose 1,5-bisphosphate + CO2 + H2O. The catalysed reaction is D-ribulose 1,5-bisphosphate + O2 = 2-phosphoglycolate + (2R)-3-phosphoglycerate + 2 H(+). Functionally, ruBisCO catalyzes two reactions: the carboxylation of D-ribulose 1,5-bisphosphate, the primary event in carbon dioxide fixation, as well as the oxidative fragmentation of the pentose substrate in the photorespiration process. Both reactions occur simultaneously and in competition at the same active site. This Polemonium reptans (Greek valerian) protein is Ribulose bisphosphate carboxylase large chain.